The primary structure comprises 172 residues: Peptidyl-prolyl cis-trans isomerase (172 aa).

The 164-residue stretch at 7 to 170 folds into the PPIase cyclophilin-type domain; it reads FFDMTVGGAP…KVVKVADCGQ (164 aa).

It belongs to the cyclophilin-type PPIase family.

It localises to the cytoplasm. The enzyme catalyses [protein]-peptidylproline (omega=180) = [protein]-peptidylproline (omega=0). Its activity is regulated as follows. Binds cyclosporin A (CsA). CsA mediates some of its effects via an inhibitory action on PPIase. Its function is as follows. PPIases accelerate the folding of proteins. It catalyzes the cis-trans isomerization of proline imidic peptide bonds in oligopeptides. The chain is Peptidyl-prolyl cis-trans isomerase (CYP) from Zea mays (Maize).